The following is a 295-amino-acid chain: Putative clathrin assembly protein At5g65370 (295 aa).

Residues 26–169 (CSSVNAKTID…SIAEVLGITP (144 aa)) form the ENTH domain.

The protein resides in the membrane. It is found in the clathrin-coated pit. It localises to the golgi apparatus. Its subcellular location is the cytoplasmic vesicle. The protein localises to the clathrin-coated vesicle. This chain is Putative clathrin assembly protein At5g65370, found in Arabidopsis thaliana (Mouse-ear cress).